The following is a 1051-amino-acid chain: Leucine zipper protein 1 (1051 aa).

N-acetylalanine is present on Ala-2. Residues Ala-11–Leu-354 are a coiled coil. 4 disordered regions span residues Ile-247–Asn-293, Arg-374–Glu-401, Ala-432–Thr-554, and Ala-569–Pro-601. Over residues Lys-254–Asn-293 the composition is skewed to basic and acidic residues. Phosphoserine occurs at positions 256, 261, 395, 513, 571, 575, 612, and 660. The segment covering Ala-569 to Gly-578 has biased composition (polar residues). The interval Val-675–Asn-727 is disordered. A Phosphothreonine modification is found at Thr-680. Ser-691 carries the post-translational modification Phosphoserine. The span at Glu-707–Lys-720 shows a compositional bias: basic and acidic residues. A Phosphoserine modification is found at Ser-746. The segment covering Val-789–Ile-799 has biased composition (low complexity). The disordered stretch occupies residues Val-789–Asn-837. The interval Ser-834–Pro-884 is required for interaction with FLNA. Ser-906 carries the phosphoserine modification. Residues Arg-929–Pro-938 are compositionally biased toward basic and acidic residues. The disordered stretch occupies residues Arg-929–Val-1000. Polar residues-rich tracts occupy residues Glu-946–Asp-958 and Arg-989–Glu-999. Thr-957 is subject to Phosphothreonine. Position 993 is a phosphoserine (Ser-993).

In terms of assembly, component of the CERF-1 ISWI chromatin remodeling complex (also called the CECR2-containing remodeling factor (CERF) complex) at least composed of CECR2 and SMARCA1. Component of the CERF-5 ISWI chromatin remodeling complex at least composed of CECR2 and SMARCA5/SNF2H. LUZP1 is detected as part of the CERF-1 and CERF-5 complexes in embryonic stem (ES) cells where it is involved in complex stabilization but is not detected in the complexes in the testis. Interacts (via C-terminus) with LIMA1/EPLIN; both proteins restrict ciliation and may work together to regulate this process. Interacts with myosin light chain MYL9; the interaction results in inhibition of phosphorylation of MYL9 by DAPK3. Interacts with DAPK3; the interaction is likely to occur throughout the cell cycle and reduces the LUZP1-mediated suppression of MYL9 phosphorylation. Interacts with the chromosomal passenger complex (CPC); CPC kinase activity is required for localization of LUZP1 to the centromere. Expressed in cerebral cortex, cerebellum, hippocampus and brain stem.

The protein resides in the cytoplasm. It localises to the cytoskeleton. It is found in the microtubule organizing center. Its subcellular location is the centrosome. The protein localises to the cilium basal body. The protein resides in the midbody. It localises to the chromosome. It is found in the centromere. Its subcellular location is the spindle. The protein localises to the stress fiber. The protein resides in the nucleus. It localises to the cell projection. It is found in the dendrite. Its subcellular location is the perikaryon. The protein localises to the cell junction. The protein resides in the tight junction. F-actin cross-linking protein. Stabilizes actin and acts as a negative regulator of primary cilium formation. Positively regulates the phosphorylation of both myosin II and protein phosphatase 1 regulatory subunit PPP1R12A/MYPT1 and promotes the assembly of myosin II stacks within actin stress fibers. Inhibits the phosphorylation of myosin light chain MYL9 by DAPK3 and suppresses the constriction velocity of the contractile ring during cytokinesis. Binds to microtubules and promotes epithelial cell apical constriction by up-regulating levels of diphosphorylated myosin light chain (MLC) through microtubule-dependent inhibition of MLC dephosphorylation by myosin phosphatase. Involved in regulation of cell migration, nuclear size and centriole number, probably through regulation of the actin cytoskeleton. Component of the CERF-1 and CERF-5 chromatin remodeling complexes in embryonic stem cells where it acts to stabilize the complexes. Plays a role in embryonic brain and cardiovascular development. The chain is Leucine zipper protein 1 (Luzp1) from Rattus norvegicus (Rat).